Here is a 512-residue protein sequence, read N- to C-terminus: Annexin A7 (512 aa).

Low complexity predominate over residues 14 to 38 (GYPGGDPSYPPAAQQAFPGGQFPPA). 2 disordered regions span residues 14 to 62 (GYPG…GYPH) and 146 to 190 (GGFS…AQPT). Positions 39-52 (AGGGAFPPASGGGN) are enriched in gly residues. Positions 164 to 182 (MPGQMPGQMPGQAPSGYPS) are enriched in low complexity. Annexin repeat units follow at residues 209-279 (FDAL…ALFM), 280-351 (PSTY…SIMA), 364-436 (QQAE…AVLQ), and 440-511 (NRPL…AISG).

This sequence belongs to the annexin family.

In terms of biological role, calcium/phospholipid-binding protein which promotes membrane fusion and is involved in exocytosis. In Xenopus laevis (African clawed frog), this protein is Annexin A7 (anxa7).